We begin with the raw amino-acid sequence, 275 residues long: Membrane protein insertase YidC 1 (275 aa).

A signal peptide spans 1–25; sequence MRKVLRVKKNIKIARIVPLVLLLVA. A lipid anchor (N-palmitoyl cysteine) is attached at Cys26. Residue Cys26 is the site of S-diacylglycerol cysteine attachment. A run of 5 helical transmembrane segments spans residues 58-78, 129-149, 171-191, 198-216, and 222-240; these read SIGV…MPLF, YASL…FQAL, LYLL…LTNL, VMMT…FMGF, and VVLY…LLLL.

Belongs to the OXA1/ALB3/YidC family. Type 2 subfamily.

It localises to the cell membrane. Functionally, required for the insertion and/or proper folding and/or complex formation of integral membrane proteins into the membrane. Involved in integration of membrane proteins that insert both dependently and independently of the Sec translocase complex, as well as at least some lipoproteins. This is Membrane protein insertase YidC 1 from Streptococcus pyogenes serotype M1.